The sequence spans 313 residues: MLDNVLRIATRQSPLALWQAQYVKQRLEACHQGLRVELVPMVTRGDVILDTPLAKVGGKGLFVKELEIALLENRADIAVHSMKDVPVEFPEGLGLVTICEREDPRDAFVSNRYASLDDLPKGSVVGTSSLRRQCQLAERRPDLVIRSLRGNVGTRLGKLDNGDYDAIILAVAGLKRLGLESRIRVAMPPELCLPAVGQGAVGIECRLDDDRTRALLSPLNHDETAIRVQAERAMNMRLEGGCQVPIGSYAELINGELWLRALVGAPDGSQMVRGERRGLPQDAEMLGISLADELLNNGARAILADVYNGEPPA.

Position 242 is an S-(dipyrrolylmethanemethyl)cysteine (C242).

The protein belongs to the HMBS family. In terms of assembly, monomer. Dipyrromethane is required as a cofactor.

The catalysed reaction is 4 porphobilinogen + H2O = hydroxymethylbilane + 4 NH4(+). The protein operates within porphyrin-containing compound metabolism; protoporphyrin-IX biosynthesis; coproporphyrinogen-III from 5-aminolevulinate: step 2/4. In terms of biological role, tetrapolymerization of the monopyrrole PBG into the hydroxymethylbilane pre-uroporphyrinogen in several discrete steps. The chain is Porphobilinogen deaminase from Enterobacter sp. (strain 638).